The following is a 310-amino-acid chain: MQLNNNVTEFILLGLTQDPFWKKIVFVIFLRLYLGTLLGNLLIIISVKTSQALKNPMFFFLFYLSLSDTCLSTSITPRMIVDALLKKTTISFSECMIQVFSSHVFGCLEIFILILTAVDRYVDICKPLHYMTIISQWVCGVLMAVAWVGSCVHSLVQIFLALSLPFCGPNVINHCFCDLQPLLKQACSETYVVNLLLVSNSGAICAVSYVMLIFSYVIFLHSLRNHSAEVIKKALSTCVSHIIVVILFFGPCIFMYTCLATVFPMDKMIAVFYTVGTSFLNPVIYTLKNTEVKSAMRKLWSKKLITDDKR.

Topologically, residues 1–23 (MQLNNNVTEFILLGLTQDPFWKK) are extracellular. A glycan (N-linked (GlcNAc...) asparagine) is linked at Asn6. A helical transmembrane segment spans residues 24 to 47 (IVFVIFLRLYLGTLLGNLLIIISV). At 48–55 (KTSQALKN) the chain is on the cytoplasmic side. A helical transmembrane segment spans residues 56–77 (PMFFFLFYLSLSDTCLSTSITP). Topologically, residues 78-98 (RMIVDALLKKTTISFSECMIQ) are extracellular. Cysteines 95 and 187 form a disulfide. Residues 99–118 (VFSSHVFGCLEIFILILTAV) traverse the membrane as a helical segment. Residues 119–137 (DRYVDICKPLHYMTIISQW) lie on the Cytoplasmic side of the membrane. The helical transmembrane segment at 138–156 (VCGVLMAVAWVGSCVHSLV) threads the bilayer. Over 157–193 (QIFLALSLPFCGPNVINHCFCDLQPLLKQACSETYVV) the chain is Extracellular. Residues 194 to 217 (NLLLVSNSGAICAVSYVMLIFSYV) traverse the membrane as a helical segment. The Cytoplasmic portion of the chain corresponds to 218–233 (IFLHSLRNHSAEVIKK). The helical transmembrane segment at 234 to 256 (ALSTCVSHIIVVILFFGPCIFMY) threads the bilayer. Residues 257 to 267 (TCLATVFPMDK) are Extracellular-facing. A helical membrane pass occupies residues 268–287 (MIAVFYTVGTSFLNPVIYTL). At 288-310 (KNTEVKSAMRKLWSKKLITDDKR) the chain is on the cytoplasmic side.

This sequence belongs to the G-protein coupled receptor 1 family.

It localises to the cell membrane. In terms of biological role, odorant receptor. This chain is Olfactory receptor 4C16 (OR4C16), found in Homo sapiens (Human).